A 177-amino-acid chain; its full sequence is Ribosome maturation factor RimM (177 aa).

The 74-residue stretch at 98–171 (GETIFLSEIK…AVVMDLPEGL (74 aa)) folds into the PRC barrel domain.

It belongs to the RimM family. Binds ribosomal protein uS19.

The protein resides in the cytoplasm. Its function is as follows. An accessory protein needed during the final step in the assembly of 30S ribosomal subunit, possibly for assembly of the head region. Essential for efficient processing of 16S rRNA. May be needed both before and after RbfA during the maturation of 16S rRNA. It has affinity for free ribosomal 30S subunits but not for 70S ribosomes. The chain is Ribosome maturation factor RimM from Bdellovibrio bacteriovorus (strain ATCC 15356 / DSM 50701 / NCIMB 9529 / HD100).